A 386-amino-acid chain; its full sequence is 8-amino-7-oxononanoate synthase (386 aa).

Arg-22 and Arg-29 together coordinate substrate. Residue 109-110 (GY) participates in pyridoxal 5'-phosphate binding. His-134 is a substrate binding site. Pyridoxal 5'-phosphate is bound by residues Ser-182, 207 to 210 (DDAH), and 237 to 240 (TLSK). Position 240 is an N6-(pyridoxal phosphate)lysine (Lys-240). Residue Thr-349 coordinates substrate.

It belongs to the class-II pyridoxal-phosphate-dependent aminotransferase family. BioF subfamily. As to quaternary structure, homodimer. Requires pyridoxal 5'-phosphate as cofactor.

It catalyses the reaction 6-carboxyhexanoyl-[ACP] + L-alanine + H(+) = (8S)-8-amino-7-oxononanoate + holo-[ACP] + CO2. It functions in the pathway cofactor biosynthesis; biotin biosynthesis. Catalyzes the decarboxylative condensation of pimeloyl-[acyl-carrier protein] and L-alanine to produce 8-amino-7-oxononanoate (AON), [acyl-carrier protein], and carbon dioxide. In Beijerinckia indica subsp. indica (strain ATCC 9039 / DSM 1715 / NCIMB 8712), this protein is 8-amino-7-oxononanoate synthase.